Here is a 245-residue protein sequence, read N- to C-terminus: Mitochondrial import inner membrane translocase subunit Tim21 (245 aa).

A mitochondrion-targeting transit peptide spans 1–18 (MICAFLRVVRHAEKLHGS). Residues 64-97 (FWTQGPDPRKAKEDSSKQVSINRNQREETGVSTS) are disordered. Positions 70–79 (DPRKAKEDSS) are enriched in basic and acidic residues. A helical membrane pass occupies residues 108–128 (TYLIVVLFGVSITGSLLYTIF).

This sequence belongs to the TIM21 family. In terms of assembly, component of the TIM23 complex. Component of the MITRAC (mitochondrial translation regulation assembly intermediate of cytochrome c oxidase complex) complex, the core components of this complex being COA3/MITRAC12 and COX14. Interacts with COA3 and MT-CO1/COX1.

Its subcellular location is the mitochondrion membrane. Participates in the translocation of transit peptide-containing proteins across the mitochondrial inner membrane. Also required for assembly of mitochondrial respiratory chain complex I and complex IV as component of the MITRAC (mitochondrial translation regulation assembly intermediate of cytochrome c oxidase complex) complex. Probably shuttles between the presequence translocase and respiratory-chain assembly intermediates in a process that promotes incorporation of early nuclear-encoded subunits into these complexes. The chain is Mitochondrial import inner membrane translocase subunit Tim21 (Timm21) from Rattus norvegicus (Rat).